Reading from the N-terminus, the 332-residue chain is MLALGKLLDLTLAGREPTEKIQLTADGTRLHWLAEGALEVTPIGARDNGVDLLLSAGIHGNETAPIELLERLIRKVAAGTLKPAARVLFLFGNPEAIRRGERYVEQDMNRLFNGRHEEGSGNEAFRAAELERLAQVFFSKTERVHLHYDLHTAIRGSKIEQFALYPWAEGRQHSRSELARLRDAGIEAVLLQNKPGITFSAYTYGQLGAEAFTLELGKARPFGENQEVNLERLERSLELLIDGSEEQPDGSRLDGLKLFSVSREVIKHSDHFRLHLDDDVANFTELSPGYLLAEDIGGTRWVVDEVGARIIFPNPRVKNGLRAGILVVPAKL.

Residues His-59, Glu-62, and His-151 each coordinate Zn(2+). The active site involves Glu-215.

It belongs to the AspA/AstE family. Succinylglutamate desuccinylase subfamily. Zn(2+) serves as cofactor.

The enzyme catalyses N-succinyl-L-glutamate + H2O = L-glutamate + succinate. The protein operates within amino-acid degradation; L-arginine degradation via AST pathway; L-glutamate and succinate from L-arginine: step 5/5. In terms of biological role, transforms N(2)-succinylglutamate into succinate and glutamate. The chain is Succinylglutamate desuccinylase from Pseudomonas aeruginosa (strain LESB58).